The chain runs to 286 residues: MGAPKQRWTSEEEAALRAGVARHGVGNWRMILNDPELSSTLRYRSNVDLKDKWRNMNVIVTSSSTRDRGRTSTRRTRAAPKNNDQLLAMSTITSEVDDEIVDVKPIVSMSVEGWNTSNSKKSHSRLDNIIMEAIKNLNEPTGSHRTTIANYIEEQYWPPSDFDHLLSAKLKYLATSGKLLKVNRKYRIAPSLLEDVQREPLKLGSDASRTLTRSQVDAELVRMATMTVEAAAAAAAHAVAEAEAIMAEAEAAAREAEAAEAEARAAQAFAEAAVLTLKNRNAAKLV.

In terms of domain architecture, HTH myb-type spans 1–61 (MGAPKQRWTS…KWRNMNVIVT (61 aa)). A DNA-binding region (H-T-H motif) is located at residues 28–57 (WRMILNDPELSSTLRYRSNVDLKDKWRNMN). An H15 domain is found at 122 to 190 (SHSRLDNIIM…KVNRKYRIAP (69 aa)). The stretch at 229-277 (EAAAAAAAHAVAEAEAIMAEAEAAAREAEAAEAEARAAQAFAEAAVLTL) forms a coiled coil.

This sequence belongs to the histone H1/H5 family. SMH subfamily. In terms of assembly, forms a homodimer and heterodimers.

It localises to the nucleus. The protein resides in the chromosome. It is found in the nucleolus. Its subcellular location is the telomere. Its function is as follows. Binds preferentially double-stranded telomeric repeats, but may also bind to the single telomeric strand. This chain is Single myb histone 5 (SMH5), found in Zea mays (Maize).